A 264-amino-acid polypeptide reads, in one-letter code: Hydroxyethylthiazole kinase (264 aa).

A substrate-binding site is contributed by methionine 52. Arginine 127 and threonine 173 together coordinate ATP. Glycine 200 provides a ligand contact to substrate.

It belongs to the Thz kinase family. Mg(2+) is required as a cofactor.

The catalysed reaction is 5-(2-hydroxyethyl)-4-methylthiazole + ATP = 4-methyl-5-(2-phosphooxyethyl)-thiazole + ADP + H(+). It functions in the pathway cofactor biosynthesis; thiamine diphosphate biosynthesis; 4-methyl-5-(2-phosphoethyl)-thiazole from 5-(2-hydroxyethyl)-4-methylthiazole: step 1/1. Functionally, catalyzes the phosphorylation of the hydroxyl group of 4-methyl-5-beta-hydroxyethylthiazole (THZ). In Pectobacterium atrosepticum (strain SCRI 1043 / ATCC BAA-672) (Erwinia carotovora subsp. atroseptica), this protein is Hydroxyethylthiazole kinase.